The following is a 305-amino-acid chain: Methionyl-tRNA formyltransferase (305 aa).

Position 108–111 (108–111 (SLLP)) interacts with (6S)-5,6,7,8-tetrahydrofolate.

The protein belongs to the Fmt family.

It carries out the reaction L-methionyl-tRNA(fMet) + (6R)-10-formyltetrahydrofolate = N-formyl-L-methionyl-tRNA(fMet) + (6S)-5,6,7,8-tetrahydrofolate + H(+). In terms of biological role, attaches a formyl group to the free amino group of methionyl-tRNA(fMet). The formyl group appears to play a dual role in the initiator identity of N-formylmethionyl-tRNA by promoting its recognition by IF2 and preventing the misappropriation of this tRNA by the elongation apparatus. In Thermus thermophilus (strain ATCC BAA-163 / DSM 7039 / HB27), this protein is Methionyl-tRNA formyltransferase.